The sequence spans 550 residues: Coiled-coil domain-containing protein 60 (550 aa).

A disordered region spans residues 1 to 21 (MTKVPATKKLQSSPNSGAVRP). Positions 71-98 (AILREETAKKKKQQQLQKLKEEERNKFQ) form a coiled coil. Disordered regions lie at residues 219-293 (KFKI…EPLY) and 336-367 (AYKEMQTTLKSSERSSSTSAESHIQPVQKKSK). The span at 235–256 (RGSTLSLSRASGGSSPQSSMIS) shows a compositional bias: low complexity. Polar residues predominate over residues 336 to 345 (AYKEMQTTLK).

This is Coiled-coil domain-containing protein 60 (CCDC60) from Homo sapiens (Human).